The chain runs to 337 residues: DNA-directed RNA polymerase subunit alpha (337 aa).

The alpha N-terminal domain (alpha-NTD) stretch occupies residues Met-1–Thr-231. Positions Asn-248–Gly-337 are alpha C-terminal domain (alpha-CTD).

Belongs to the RNA polymerase alpha chain family. As to quaternary structure, homodimer. The RNAP catalytic core consists of 2 alpha, 1 beta, 1 beta' and 1 omega subunit. When a sigma factor is associated with the core the holoenzyme is formed, which can initiate transcription.

It catalyses the reaction RNA(n) + a ribonucleoside 5'-triphosphate = RNA(n+1) + diphosphate. In terms of biological role, DNA-dependent RNA polymerase catalyzes the transcription of DNA into RNA using the four ribonucleoside triphosphates as substrates. The sequence is that of DNA-directed RNA polymerase subunit alpha from Campylobacter jejuni subsp. jejuni serotype O:6 (strain 81116 / NCTC 11828).